The chain runs to 530 residues: Ubiquitin carboxyl-terminal hydrolase 17-like protein 24 (530 aa).

In terms of domain architecture, USP spans 80–375; it reads AGLQNMGNTC…QAYVLFYIQK (296 aa). The active-site Nucleophile is C89. Residue H334 is the Proton acceptor of the active site. 2 stretches are compositionally biased toward basic and acidic residues: residues 382–392 and 398–412; these read SESVSRGREPR and DTDRRATQGELKRDH. 2 disordered regions span residues 382–412 and 477–530; these read SESVSRGREPRALGAEDTDRRATQGELKRDH and NHHP…LVCQ. A compositionally biased stretch (polar residues) spans 493-505; that stretch reads TPTHQESMNTGTL. The span at 510-524 shows a compositional bias: basic residues; the sequence is GRARRSKGKNKHSKR.

It belongs to the peptidase C19 family. USP17 subfamily. Expressed in heart, brain, liver and skeletal muscle.

The protein resides in the nucleus. It is found in the nucleolus. The protein localises to the endoplasmic reticulum. The catalysed reaction is Thiol-dependent hydrolysis of ester, thioester, amide, peptide and isopeptide bonds formed by the C-terminal Gly of ubiquitin (a 76-residue protein attached to proteins as an intracellular targeting signal).. Functionally, deubiquitinating enzyme that removes conjugated ubiquitin from specific proteins to regulate different cellular processes that may include cell proliferation, progression through the cell cycle, apoptosis, cell migration, and the cellular response to viral infection. This chain is Ubiquitin carboxyl-terminal hydrolase 17-like protein 24 (USP17L24), found in Homo sapiens (Human).